The primary structure comprises 661 residues: Heme transporter BhuA (661 aa).

An N-terminal signal peptide occupies residues 1–23; sequence MKFTRTLVLASTSLLATVATSQA. The region spanning 48 to 159 is the TBDR plug domain; the sequence is KDNIEATGGT…AAGAIRYETV (112 aa). The region spanning 170-661 is the TBDR beta-barrel domain; that stretch reads TFGARIIGSY…TFTFQTAFKF (492 aa).

It belongs to the TonB-dependent receptor family.

It localises to the cell outer membrane. Its function is as follows. Heme transporter. This chain is Heme transporter BhuA (bhuA), found in Brucella ovis (strain ATCC 25840 / 63/290 / NCTC 10512).